The following is a 146-amino-acid chain: MGRFIFVSFGLLVVFLSLSGTAADCPSDWSSYEGHCYKPFDEPKTWADAEKFCTQQHKGSHLASFHSSEEADFVVTLTTPSLKTDLVWIGLKNIWNGCYWKWSDGTKLDYKDWREQFECLVSRTVNNEWLSMDCGTTCSFVCKFQA.

Residues M1–A23 form the signal peptide. In terms of domain architecture, C-type lectin spans D24 to A146. 3 cysteine pairs are disulfide-bonded: C25–C36, C53–C142, and C119–C134. 2 residues coordinate Ca(2+): S64 and E70.

It belongs to the snaclec family. Heterodimer of subunits A and B; disulfide-linked. In terms of tissue distribution, expressed by the venom gland.

It localises to the secreted. Functionally, anticoagulant protein which binds to the gamma-carboxyglutamic acid-domain regions of factor IX (F9) and factor X (F10) in the presence of calcium with a 1 to 1 stoichiometry. Also inhibits platelet aggregation by binding to platelet glycoprotein Ibalpha (GP1BA) and functioning as a blocker of von Willebrand factor (VWF). Is devoid of hemorrhagic and lethal activities. Possesses antithrombotic and thrombolytic activities. Also hydrolyzes the Aalpha-chain of fibrinogen (FGA). Does not affect the Bbeta-chain (FGB) and the gamma chain (FGG). The protein is Snaclec agkisacutacin subunit B of Deinagkistrodon acutus (Hundred-pace snake).